The primary structure comprises 196 residues: FMN-dependent NADH:quinone oxidoreductase (196 aa).

Ser-10 is an FMN binding site.

This sequence belongs to the azoreductase type 1 family. Homodimer. The cofactor is FMN.

It carries out the reaction 2 a quinone + NADH + H(+) = 2 a 1,4-benzosemiquinone + NAD(+). The enzyme catalyses N,N-dimethyl-1,4-phenylenediamine + anthranilate + 2 NAD(+) = 2-(4-dimethylaminophenyl)diazenylbenzoate + 2 NADH + 2 H(+). Quinone reductase that provides resistance to thiol-specific stress caused by electrophilic quinones. Its function is as follows. Also exhibits azoreductase activity. Catalyzes the reductive cleavage of the azo bond in aromatic azo compounds to the corresponding amines. The polypeptide is FMN-dependent NADH:quinone oxidoreductase (Cereibacter sphaeroides (strain ATCC 17023 / DSM 158 / JCM 6121 / CCUG 31486 / LMG 2827 / NBRC 12203 / NCIMB 8253 / ATH 2.4.1.) (Rhodobacter sphaeroides)).